A 412-amino-acid polypeptide reads, in one-letter code: Adenosine receptor A2a (412 aa).

Residues 1 to 7 are Extracellular-facing; sequence MPIMGSS. The chain crosses the membrane as a helical span at residues 8–32; that stretch reads VYITVELAIAVLAILGNVLVCWAVW. Residues 33 to 42 are Cytoplasmic-facing; the sequence is LNSNLQNVTN. A helical membrane pass occupies residues 43 to 66; sequence YFVVSLAAADIAVGVLAIPFAITI. At 67 to 77 the chain is on the extracellular side; sequence STGFCAACHGC. 3 disulfides stabilise this stretch: C71/C159, C74/C146, and C77/C166. The chain crosses the membrane as a helical span at residues 78–100; that stretch reads LFIACFVLVLTQSSIFSLLAIAI. Residues 101–120 are Cytoplasmic-facing; sequence DRYIAIRIPLRYNGLVTGTR. A helical membrane pass occupies residues 121-143; sequence AKGIIAICWVLSFAIGLTPMLGW. The Extracellular segment spans residues 144 to 173; it reads NNCGQPKEGKNHSQGCGEGQVACLFEDVVP. N-linked (GlcNAc...) asparagine glycosylation is present at N154. E169 is a binding site for adenosine. A helical membrane pass occupies residues 174 to 198; it reads MNYMVYFNFFACVLVPLLLMLGVYL. Over 199–234 the chain is Cytoplasmic; it reads RIFLAARRQLKQMESQPLPGERARSTLQKEVHAAKS. Residues 235-258 traverse the membrane as a helical segment; that stretch reads LAIIVGLFALCWLPLHIINCFTFF. N253 serves as a coordination point for adenosine. C259 and C262 are disulfide-bonded. Residues 259–266 are Extracellular-facing; it reads CPDCSHAP. A helical membrane pass occupies residues 267 to 290; sequence LWLMYLAIVLSHTNSVVNPFIYAY. Adenosine contacts are provided by S277 and H278. The Cytoplasmic portion of the chain corresponds to 291–412; the sequence is RIREFRQTFR…PLAQDGAGVS (122 aa). The segment at 391–412 is disordered; sequence KGVCPEPPGLDDPLAQDGAGVS.

Belongs to the G-protein coupled receptor 1 family. Interacts (via cytoplasmic C-terminal domain) with USP4; the interaction is direct. May interact with DRD4. Interacts with NECAB2. Interacts (via cytoplasmic C-terminal domain) with GAS2L2; interaction enhances receptor-mediated adenylyl cyclase activity. Ubiquitinated. Deubiquitinated by USP4; leading to stabilization and expression at the cell surface.

Its subcellular location is the cell membrane. Receptor for adenosine. The activity of this receptor is mediated by G proteins which activate adenylyl cyclase. In Homo sapiens (Human), this protein is Adenosine receptor A2a (ADORA2A).